Here is a 101-residue protein sequence, read N- to C-terminus: Small ribosomal subunit protein uS10 (101 aa).

Belongs to the universal ribosomal protein uS10 family. As to quaternary structure, part of the 30S ribosomal subunit.

Functionally, involved in the binding of tRNA to the ribosomes. The chain is Small ribosomal subunit protein uS10 from Mycoplasmopsis synoviae (strain 53) (Mycoplasma synoviae).